We begin with the raw amino-acid sequence, 483 residues long: ATP-dependent RNA helicase dbp-5 (483 aa).

Residues 1-47 are disordered; sequence MADLASRITKPDEAPAAAPEAAPVSAPASEEPKAPENETSIEESQSN. Residues 14–29 are compositionally biased toward low complexity; that stretch reads APAAAPEAAPVSAPAS. A Q motif motif is present at residues 74 to 102; that stretch reads SSFDELGLPEAVNRGLLAINFKKPSKVQE. A Helicase ATP-binding domain is found at 107–276; sequence LMLSDPPRNM…ERFAPNANQM (170 aa). Position 120–127 (120–127) interacts with ATP; sequence SQSGTGKT. Positions 223–226 match the DEAD box motif; sequence DEAD. In terms of domain architecture, Helicase C-terminal spans 304–455; sequence ILCKLYGLMT…LIQLNPNDLD (152 aa).

The protein belongs to the DEAD box helicase family. DDX19/DBP5 subfamily. Associates with the nuclear pore complex.

The protein localises to the cytoplasm. Its subcellular location is the nucleus. It localises to the nuclear pore complex. The protein resides in the nucleus membrane. The enzyme catalyses ATP + H2O = ADP + phosphate + H(+). Its function is as follows. ATP-dependent RNA helicase associated with the nuclear pore complex and essential for mRNA export from the nucleus. May participate in a terminal step of mRNA export through the removal of proteins that accompany mRNA through the nucleopore complex. May also be involved in early transcription. The protein is ATP-dependent RNA helicase dbp-5 (dbp-5) of Neurospora crassa (strain ATCC 24698 / 74-OR23-1A / CBS 708.71 / DSM 1257 / FGSC 987).